We begin with the raw amino-acid sequence, 211 residues long: Redox-sensing transcriptional repressor Rex (211 aa).

A DNA-binding region (H-T-H motif) is located at residues 18-57 (LYYRFLENLHASGKQRVSSSELSEAVKVDSATIRRDFSYF). 92 to 97 (GVGNLG) lines the NAD(+) pocket.

It belongs to the transcriptional regulatory Rex family. Homodimer.

The protein resides in the cytoplasm. In terms of biological role, modulates transcription in response to changes in cellular NADH/NAD(+) redox state. The chain is Redox-sensing transcriptional repressor Rex from Halalkalibacterium halodurans (strain ATCC BAA-125 / DSM 18197 / FERM 7344 / JCM 9153 / C-125) (Bacillus halodurans).